Reading from the N-terminus, the 362-residue chain is Putative glutamate--cysteine ligase 2-1 (362 aa).

Belongs to the glutamate--cysteine ligase type 2 family. YbdK subfamily.

It carries out the reaction L-cysteine + L-glutamate + ATP = gamma-L-glutamyl-L-cysteine + ADP + phosphate + H(+). In terms of biological role, ATP-dependent carboxylate-amine ligase which exhibits weak glutamate--cysteine ligase activity. The sequence is that of Putative glutamate--cysteine ligase 2-1 from Streptomyces avermitilis (strain ATCC 31267 / DSM 46492 / JCM 5070 / NBRC 14893 / NCIMB 12804 / NRRL 8165 / MA-4680).